The following is a 95-amino-acid chain: Large ribosomal subunit protein uL23 (95 aa).

This sequence belongs to the universal ribosomal protein uL23 family. Part of the 50S ribosomal subunit. Contacts protein L29, and trigger factor when it is bound to the ribosome.

Its function is as follows. One of the early assembly proteins it binds 23S rRNA. One of the proteins that surrounds the polypeptide exit tunnel on the outside of the ribosome. Forms the main docking site for trigger factor binding to the ribosome. This is Large ribosomal subunit protein uL23 from Geobacillus kaustophilus (strain HTA426).